A 407-amino-acid chain; its full sequence is Putative ammonium transporter MTH_661 (407 aa).

The next 12 helical transmembrane spans lie at 9-29, 47-67, 70-90, 101-121, 129-149, 162-182, 196-216, 226-246, 257-277, 279-299, 312-332, and 357-377; these read AWML…VAMF, FVSL…LIFG, VSGI…GSAS, FAIF…GAVV, WILF…HWVW, FAGG…LALV, LGYS…FNAG, ANAM…WILM, LGAL…AGFV, IGAS…AVSW, VFGI…LFAV, and IGVV…AMLL.

This sequence belongs to the ammonia transporter channel (TC 1.A.11.2) family.

It localises to the cell membrane. This is Putative ammonium transporter MTH_661 from Methanothermobacter thermautotrophicus (strain ATCC 29096 / DSM 1053 / JCM 10044 / NBRC 100330 / Delta H) (Methanobacterium thermoautotrophicum).